We begin with the raw amino-acid sequence, 810 residues long: Interleukin-4 receptor subunit alpha (810 aa).

An N-terminal signal peptide occupies residues 1–25 (MGRLCTKFLTSVGCLILLLVTGSGS). Residues 26-233 (IKVLGEPTCF…NHFQLPLIQR (208 aa)) are Extracellular-facing. The cysteines at positions 34 and 44 are disulfide-linked. Asn72 is a glycosylation site (N-linked (GlcNAc...) asparagine). An intrachain disulfide couples Cys75 to Cys87. Positions 126 to 224 (APDNLTLHTN…EWSPSITWYN (99 aa)) constitute a Fibronectin type-III domain. Asn129, Asn135, and Asn163 each carry an N-linked (GlcNAc...) asparagine glycan. Ser165 is subject to Phosphoserine. The WSXWS motif motif lies at 213-217 (WSEWS). Residues 234-257 (LPLGVTISCLCIPLFCLFCYFSIT) traverse the membrane as a helical segment. At 258 to 810 (KIKKIWWDQI…PVGALGIAVS (553 aa)) the chain is on the cytoplasmic side. A Box 1 motif motif is present at residues 263 to 271 (WWDQIPTPA). The required for IRS1 activation and IL4-induced cell growth stretch occupies residues 441–557 (GSGQASVSWA…ESWEQILHMS (117 aa)). A disordered region spans residues 460–482 (ATCQVTEQPSHPGPLSGSPAQSA). Phosphotyrosine is present on Tyr500. Residues 510–546 (APNPGELAPEQQQADHLEEEEPPSPADPHSSGPPMQP) form a disordered region. Positions 557–653 (SVLQHGAAAG…SSVPLFTFGL (97 aa)) are required for IL4-induced gene expression. Residues Tyr575, Tyr603, and Tyr631 each carry the phosphotyrosine modification. The interval 586-672 (AAQDPGVPGV…NSDPPKSPPE (87 aa)) is disordered. Residues 635–647 (QNPVPNQSPSSVP) show a composition bias toward low complexity. Residues 707–712 (IVYSSL) carry the ITIM motif motif. Positions 766–810 (PPEANLMSAPKTPSNLSGEGKGPGHSPVPSQTTEVPVGALGIAVS) are disordered.

The protein belongs to the type I cytokine receptor family. Type 4 subfamily. In terms of assembly, the functional IL4 receptor is formed by initial binding of IL4 to IL4R. Subsequent recruitment to the complex of the common gamma chain, in immune cells, creates a type I receptor and, in non-immune cells, of IL13RA1 forms a type II receptor. IL4R can also interact with the IL13/IL13RA1 complex to form a similar type II receptor. Interacts with the SH2-containing phosphatases, PTPN6/SHIP1, PTPN11/SHIP2 and INPP5D/SHIP. Interacts with JAK3. Interacts with PIK3C3. Interacts with JAK1 through a Box 1-containing region; inhibited by SOCS5. Interacts with SOCS5; inhibits IL4 signaling. Interacts with CLM1. Interacts with IL13RA2. On IL4 binding, phosphorylated on C-terminal tyrosine residues. Post-translationally, soluble IL4R can also be produced by proteolytic cleavage at the cell surface (shedding). As to expression, expressed in both Th1 and Th2 cells.

It localises to the cell membrane. The protein resides in the secreted. Receptor for both interleukin 4 and interleukin 13. Couples to the JAK1/2/3-STAT6 pathway. The IL4 response is involved in promoting Th2 differentiation. The IL4/IL13 responses are involved in regulating IgE production and, chemokine and mucus production at sites of allergic inflammation. In certain cell types, can signal through activation of insulin receptor substrates, IRS1/IRS2. The chain is Interleukin-4 receptor subunit alpha (Il4r) from Mus musculus (Mouse).